A 443-amino-acid chain; its full sequence is Probable D-serine dehydratase (443 aa).

N6-(pyridoxal phosphate)lysine is present on K116.

It belongs to the serine/threonine dehydratase family. DsdA subfamily. It depends on pyridoxal 5'-phosphate as a cofactor.

It carries out the reaction D-serine = pyruvate + NH4(+). The protein is Probable D-serine dehydratase of Bacillus cereus (strain G9842).